Consider the following 179-residue polypeptide: ATP synthase subunit delta 1 (179 aa).

This sequence belongs to the ATPase delta chain family. F-type ATPases have 2 components, F(1) - the catalytic core - and F(0) - the membrane proton channel. F(1) has five subunits: alpha(3), beta(3), gamma(1), delta(1), epsilon(1). F(0) has three main subunits: a(1), b(2) and c(10-14). The alpha and beta chains form an alternating ring which encloses part of the gamma chain. F(1) is attached to F(0) by a central stalk formed by the gamma and epsilon chains, while a peripheral stalk is formed by the delta and b chains.

The protein resides in the cell inner membrane. F(1)F(0) ATP synthase produces ATP from ADP in the presence of a proton or sodium gradient. F-type ATPases consist of two structural domains, F(1) containing the extramembraneous catalytic core and F(0) containing the membrane proton channel, linked together by a central stalk and a peripheral stalk. During catalysis, ATP synthesis in the catalytic domain of F(1) is coupled via a rotary mechanism of the central stalk subunits to proton translocation. Functionally, this protein is part of the stalk that links CF(0) to CF(1). It either transmits conformational changes from CF(0) to CF(1) or is implicated in proton conduction. The polypeptide is ATP synthase subunit delta 1 (Syntrophotalea carbinolica (strain DSM 2380 / NBRC 103641 / GraBd1) (Pelobacter carbinolicus)).